The following is a 60-amino-acid chain: Large ribosomal subunit protein bL32 (60 aa).

Residues 1–22 (MAVPKKKTSKSRRDMRRSHHAL) are compositionally biased toward basic residues. The tract at residues 1–27 (MAVPKKKTSKSRRDMRRSHHALKGSAY) is disordered.

Belongs to the bacterial ribosomal protein bL32 family.

This Rhodospirillum centenum (strain ATCC 51521 / SW) protein is Large ribosomal subunit protein bL32.